The chain runs to 287 residues: Nucleoid occlusion protein (287 aa).

Residues 146–165 (EALAQRVGKSQSAIANKMRL) constitute a DNA-binding region (H-T-H motif).

The protein belongs to the ParB family.

The protein resides in the cytoplasm. Its subcellular location is the nucleoid. In terms of biological role, effects nucleoid occlusion by binding relatively nonspecifically to DNA and preventing the assembly of the division machinery in the vicinity of the nucleoid, especially under conditions that disturb the cell cycle. It helps to coordinate cell division and chromosome segregation by preventing the formation of the Z ring through the nucleoid, which would cause chromosome breakage. The chain is Nucleoid occlusion protein from Listeria monocytogenes serotype 4a (strain HCC23).